The primary structure comprises 594 residues: DNA ligase (594 aa).

Residues aspartate 32–aspartate 36, serine 81–leucine 82, and glutamate 118 contribute to the NAD(+) site. Lysine 120 serves as the catalytic N6-AMP-lysine intermediate. 4 residues coordinate NAD(+): arginine 141, glutamate 181, lysine 299, and lysine 323. Residues cysteine 417, cysteine 420, cysteine 436, and cysteine 442 each contribute to the Zn(2+) site.

Belongs to the NAD-dependent DNA ligase family. LigA subfamily. The cofactor is Mg(2+). It depends on Mn(2+) as a cofactor.

It catalyses the reaction NAD(+) + (deoxyribonucleotide)n-3'-hydroxyl + 5'-phospho-(deoxyribonucleotide)m = (deoxyribonucleotide)n+m + AMP + beta-nicotinamide D-nucleotide.. Its function is as follows. DNA ligase that catalyzes the formation of phosphodiester linkages between 5'-phosphoryl and 3'-hydroxyl groups in double-stranded DNA using NAD as a coenzyme and as the energy source for the reaction. It is essential for DNA replication and repair of damaged DNA. This is DNA ligase from Blochmanniella floridana.